The following is a 252-amino-acid chain: Indole-3-glycerol phosphate synthase (252 aa).

It belongs to the TrpC family.

It carries out the reaction 1-(2-carboxyphenylamino)-1-deoxy-D-ribulose 5-phosphate + H(+) = (1S,2R)-1-C-(indol-3-yl)glycerol 3-phosphate + CO2 + H2O. It participates in amino-acid biosynthesis; L-tryptophan biosynthesis; L-tryptophan from chorismate: step 4/5. This Leptospira interrogans serogroup Icterohaemorrhagiae serovar copenhageni (strain Fiocruz L1-130) protein is Indole-3-glycerol phosphate synthase.